Here is a 196-residue protein sequence, read N- to C-terminus: MASPEEMGDDASEIPSPPKNTYKDPDGGRQRFLLELEFIQCLANPTYIHYLAQNRYFEDEAFIGYLKYLQYWQRPEYIKFIMYPHCLYFLELLQNPNFRTAMAHPANKELAHRQQFYYWKNYRNNRLKHILPRPLPEPVPPQPPVAPSTSLPPAPSATAALSPALSPMQYNNMLSKNDTRNMGATGIDRRKRKKGI.

Over residues 1 to 12 the composition is skewed to acidic residues; it reads MASPEEMGDDAS. Disordered stretches follow at residues 1–24 and 133–196; these read MASP…TYKD and RPLP…KKGI. Over residues 133–155 the composition is skewed to pro residues; sequence RPLPEPVPPQPPVAPSTSLPPAP. Low complexity predominate over residues 156 to 167; it reads SATAALSPALSP. Residues 168–182 show a composition bias toward polar residues; it reads MQYNNMLSKNDTRNM.

The protein belongs to the Mediator complex subunit 31 family. In terms of assembly, component of the Mediator complex.

The protein resides in the nucleus. Its function is as follows. Component of the Mediator complex, a coactivator involved in the regulated transcription of nearly all RNA polymerase II-dependent genes. Mediator functions as a bridge to convey information from gene-specific regulatory proteins to the basal RNA polymerase II transcription machinery. Mediator is recruited to promoters by direct interactions with regulatory proteins and serves as a scaffold for the assembly of a functional preinitiation complex with RNA polymerase II and the general transcription factors. The polypeptide is Mediator of RNA polymerase II transcription subunit 31 (MED31) (Arabidopsis thaliana (Mouse-ear cress)).